Reading from the N-terminus, the 945-residue chain is Kinesin-like protein KIN-7F (945 aa).

Residues 34-356 (RILVSVRLRP…LLFASCAKEV (323 aa)) enclose the Kinesin motor domain. Position 120-127 (120-127 (GQTSSGKT)) interacts with ATP. Residues 365–437 (VMSDKALVKQ…QDLLQVVGDN (73 aa)) are a coiled coil. Disordered stretches follow at residues 484–512 (RRVAQREHKPQQAENNVQFTTPSRYSVSS) and 553–588 (NECLESSAVGSNSLQDPNAGSSMHINNDSNSSMNSR). Polar residues-rich tracts occupy residues 495 to 512 (QAENNVQFTTPSRYSVSS) and 560 to 587 (AVGSNSLQDPNAGSSMHINNDSNSSMNS).

This sequence belongs to the TRAFAC class myosin-kinesin ATPase superfamily. Kinesin family. KIN-7 subfamily. Binds microtubules.

Functionally, binds ATP/ADP in vitro. Possesses low ATPase activity but high affinity for microtubules. The protein is Kinesin-like protein KIN-7F of Oryza sativa subsp. japonica (Rice).